The chain runs to 181 residues: Ferritin (181 aa).

The 150-residue stretch at 6–155 folds into the Ferritin-like diiron domain; that stretch reads RHNYHEDCEP…NLITRLKRAG (150 aa). Residues Glu-23, Glu-58, His-61, Glu-103, and Gln-137 each coordinate Fe cation.

It belongs to the ferritin family. As to quaternary structure, oligomer of 12 or 24 subunits. The functional molecule is roughly spherical and contains a central cavity into which the polymeric mineral iron core is deposited. In terms of processing, the N-terminus is blocked.

Its subcellular location is the cytoplasm. The catalysed reaction is 4 Fe(2+) + O2 + 4 H(+) = 4 Fe(3+) + 2 H2O. In terms of biological role, stores iron in a soluble, non-toxic, readily available form. Important for iron homeostasis. Has ferroxidase activity. Iron is taken up in the ferrous form and deposited as ferric hydroxides after oxidation. This Pacifastacus leniusculus (Signal crayfish) protein is Ferritin.